The following is a 548-amino-acid chain: Spindle pole body-associated protein cut12 (548 aa).

An interaction with plo1 region spans residues 122-325 (FKSPLLQSTP…GQQSKYKGKE (204 aa)). The tract at residues 123 to 182 (KSPLLQSTPKPNINNPDNENKSKHDEFDNRYNININESYKNETKSNQRLGEDVPSKKKYP) is disordered. Polar residues predominate over residues 126-139 (LLQSTPKPNINNPD). 2 stretches are compositionally biased toward basic and acidic residues: residues 140-151 (NENKSKHDEFDN) and 161-182 (YKNE…KKYP). Positions 261–312 (KQKFSMLDSAHSDLELELTSIRERLESLILEKQEEINFWKQRCRALETEKIH) form a coiled coil. The segment covering 344–356 (PITTKVVSRPSQS) has biased composition (polar residues). Disordered regions lie at residues 344–369 (PITT…PSKN) and 510–548 (SRVD…QLNS). Positions 522–548 (RTANAKKRLEERRRRRKLKLQELQLNS) form a coiled coil.

In terms of assembly, self-associates. Interacts with plo1.

It localises to the cytoplasm. The protein resides in the cytoskeleton. Its subcellular location is the microtubule organizing center. The protein localises to the spindle pole body. Required for bipolar spindle formation. May act as a regulator of the p34cdc2/cyclin B kinase. Required for full activation of the plo1 kinase. However, in cut12.1 cells at restrictive temperature the H1 kinase does rise concomitant with entry into mitosis, indicating that cut12 is not required for activation of p34cdc2/cyclin B. The cut12.s11 allele may promote cdc2-independent phosphorylation of SPB proteins thereby overcoming the requirement for cdc25 in cell cycle progression. This Schizosaccharomyces pombe (strain 972 / ATCC 24843) (Fission yeast) protein is Spindle pole body-associated protein cut12 (cut12).